The chain runs to 256 residues: Ribosomal RNA small subunit methyltransferase J (256 aa).

S-adenosyl-L-methionine contacts are provided by residues 104-105 (RD), 120-121 (ER), 156-157 (SS), and Asp174.

This sequence belongs to the methyltransferase superfamily. RsmJ family.

The protein localises to the cytoplasm. It catalyses the reaction guanosine(1516) in 16S rRNA + S-adenosyl-L-methionine = N(2)-methylguanosine(1516) in 16S rRNA + S-adenosyl-L-homocysteine + H(+). Functionally, specifically methylates the guanosine in position 1516 of 16S rRNA. In Yersinia pseudotuberculosis serotype O:1b (strain IP 31758), this protein is Ribosomal RNA small subunit methyltransferase J.